The following is a 1406-amino-acid chain: DNA-directed RNA polymerase subunit beta' (1406 aa).

Positions 72, 74, 87, and 90 each coordinate Zn(2+). Positions 462, 464, and 466 each coordinate Mg(2+). Positions 816, 891, 898, and 901 each coordinate Zn(2+).

It belongs to the RNA polymerase beta' chain family. As to quaternary structure, the RNAP catalytic core consists of 2 alpha, 1 beta, 1 beta' and 1 omega subunit. When a sigma factor is associated with the core the holoenzyme is formed, which can initiate transcription. Requires Mg(2+) as cofactor. Zn(2+) is required as a cofactor.

The catalysed reaction is RNA(n) + a ribonucleoside 5'-triphosphate = RNA(n+1) + diphosphate. In terms of biological role, DNA-dependent RNA polymerase catalyzes the transcription of DNA into RNA using the four ribonucleoside triphosphates as substrates. This chain is DNA-directed RNA polymerase subunit beta', found in Psychrobacter arcticus (strain DSM 17307 / VKM B-2377 / 273-4).